The chain runs to 154 residues: Transcriptional repressor NrdR (154 aa).

A zinc finger lies at 3-34; sequence CPFCGNVDTQVKDSRPAEDNVAIRRRRFCPAC. An ATP-cone domain is found at 49–139; the sequence is LVVVKSSGRR…VYKNFQAADD (91 aa).

It belongs to the NrdR family. The cofactor is Zn(2+).

Its function is as follows. Negatively regulates transcription of bacterial ribonucleotide reductase nrd genes and operons by binding to NrdR-boxes. This chain is Transcriptional repressor NrdR, found in Paracoccus denitrificans (strain Pd 1222).